A 198-amino-acid polypeptide reads, in one-letter code: Glycerol-3-phosphate acyltransferase (198 aa).

5 helical membrane-spanning segments follow: residues 10 to 30, 57 to 77, 86 to 106, 118 to 138, and 160 to 180; these read LIPI…WILV, GISF…ILIL, IMYL…WFLF, VVLS…AVVF, and AVTE…IVLI.

The protein belongs to the PlsY family. As to quaternary structure, probably interacts with PlsX.

It localises to the cell inner membrane. The catalysed reaction is an acyl phosphate + sn-glycerol 3-phosphate = a 1-acyl-sn-glycero-3-phosphate + phosphate. The protein operates within lipid metabolism; phospholipid metabolism. Functionally, catalyzes the transfer of an acyl group from acyl-phosphate (acyl-PO(4)) to glycerol-3-phosphate (G3P) to form lysophosphatidic acid (LPA). This enzyme utilizes acyl-phosphate as fatty acyl donor, but not acyl-CoA or acyl-ACP. The protein is Glycerol-3-phosphate acyltransferase of Anaplasma marginale (strain St. Maries).